We begin with the raw amino-acid sequence, 298 residues long: MRNHTMVTEFILLGIPETEGLETALLFLFSSFYLCTLLGNVLILTAIISSTRLHTPMYFFLGNLSIFDLGFSSTTVPKMLFYLSGNSHAISYAGCVSQLFFYHFLGCTECFLYTVMACDRFVAICFPLRYTVIMNHRVCFMLATGTWMIGCVHAMILTPLTFQLPYCGPNKVGYYFCDIPAVLPLACKDTSLAQRVGFTNVGLLSLICFFLILVSYTCIGISISKIRSAEGRQRAFSTCSAHLTAILCAYGPVIVIYLQPNPSALLGSIIQILNNLVTPMLNPLIYSLRNKDVKSDQP.

Residues 1-23 are Extracellular-facing; that stretch reads MRNHTMVTEFILLGIPETEGLET. Residue Asn3 is glycosylated (N-linked (GlcNAc...) asparagine). A helical transmembrane segment spans residues 24–44; sequence ALLFLFSSFYLCTLLGNVLIL. Residues 45–52 are Cytoplasmic-facing; sequence TAIISSTR. Residues 53–73 traverse the membrane as a helical segment; sequence LHTPMYFFLGNLSIFDLGFSS. Residues 74–97 lie on the Extracellular side of the membrane; sequence TTVPKMLFYLSGNSHAISYAGCVS. The cysteines at positions 95 and 187 are disulfide-linked. A helical membrane pass occupies residues 98–118; that stretch reads QLFFYHFLGCTECFLYTVMAC. At 119 to 137 the chain is on the cytoplasmic side; sequence DRFVAICFPLRYTVIMNHR. Residues 138–158 form a helical membrane-spanning segment; sequence VCFMLATGTWMIGCVHAMILT. At 159–195 the chain is on the extracellular side; sequence PLTFQLPYCGPNKVGYYFCDIPAVLPLACKDTSLAQR. The helical transmembrane segment at 196-215 threads the bilayer; that stretch reads VGFTNVGLLSLICFFLILVS. Over 216–235 the chain is Cytoplasmic; sequence YTCIGISISKIRSAEGRQRA. The helical transmembrane segment at 236-256 threads the bilayer; sequence FSTCSAHLTAILCAYGPVIVI. Topologically, residues 257 to 267 are extracellular; that stretch reads YLQPNPSALLG. Residues 268 to 288 traverse the membrane as a helical segment; that stretch reads SIIQILNNLVTPMLNPLIYSL. The Cytoplasmic segment spans residues 289 to 298; that stretch reads RNKDVKSDQP.

The protein belongs to the G-protein coupled receptor 1 family.

The protein resides in the cell membrane. Odorant receptor. This chain is Putative olfactory receptor 10D4 (OR10D4P), found in Homo sapiens (Human).